We begin with the raw amino-acid sequence, 291 residues long: Oxidative stress-responsive serine-rich protein 1 (291 aa).

Residues 48–174 (EDAKPKSACA…SSDAPQVSQA (127 aa)) are disordered. The segment covering 65–83 (STRKSSRGAVRTQRRRRSK) has biased composition (basic residues). A compositionally biased stretch (polar residues) spans 132-142 (ECSSSLDTNHT). 2 positions are modified to phosphothreonine: Thr142 and Thr232.

This Bos taurus (Bovine) protein is Oxidative stress-responsive serine-rich protein 1 (OSER1).